We begin with the raw amino-acid sequence, 178 residues long: Small ribosomal subunit protein uS7c (178 aa).

The segment covering 137–146 (QKKEEIEKSK) has biased composition (basic and acidic residues). Positions 137-178 (QKKEEIEKSKSPVNNNKKFISKNKKSKNKKQKKRLKRKKNIY) are disordered. Basic residues predominate over residues 155–178 (FISKNKKSKNKKQKKRLKRKKNIY).

The protein belongs to the universal ribosomal protein uS7 family. As to quaternary structure, part of the 30S ribosomal subunit.

It localises to the plastid. In terms of biological role, one of the primary rRNA binding proteins, it binds directly to 16S rRNA where it nucleates assembly of the head domain of the 30S subunit. The protein is Small ribosomal subunit protein uS7c (rps7) of Euglena longa (Euglenophycean alga).